We begin with the raw amino-acid sequence, 135 residues long: Putative pre-16S rRNA nuclease (135 aa).

Belongs to the YqgF nuclease family.

The protein localises to the cytoplasm. In terms of biological role, could be a nuclease involved in processing of the 5'-end of pre-16S rRNA. The chain is Putative pre-16S rRNA nuclease from Thermus thermophilus (strain ATCC 27634 / DSM 579 / HB8).